The primary structure comprises 545 residues: CTP synthase (545 aa).

The amidoligase domain stretch occupies residues 1–266 (MKTKFIFITG…DQKIAIMLKL (266 aa)). Ser-14 serves as a coordination point for CTP. Residue Ser-14 participates in UTP binding. Residues 15–20 (SLGKGL) and Asp-72 contribute to the ATP site. Residues Asp-72 and Glu-140 each contribute to the Mg(2+) site. CTP is bound by residues 147–149 (DIE), 187–192 (KTKPTQ), and Lys-223. UTP is bound by residues 187 to 192 (KTKPTQ) and Lys-223. Residues 291–545 (TIGIVGKYVD…IKASCENKNK (255 aa)) form the Glutamine amidotransferase type-1 domain. Gly-353 serves as a coordination point for L-glutamine. Residue Cys-380 is the Nucleophile; for glutamine hydrolysis of the active site. Residues 381 to 384 (LGMQ), Glu-404, and Arg-472 contribute to the L-glutamine site. Catalysis depends on residues His-518 and Glu-520.

This sequence belongs to the CTP synthase family. As to quaternary structure, homotetramer.

The catalysed reaction is UTP + L-glutamine + ATP + H2O = CTP + L-glutamate + ADP + phosphate + 2 H(+). The enzyme catalyses L-glutamine + H2O = L-glutamate + NH4(+). It catalyses the reaction UTP + NH4(+) + ATP = CTP + ADP + phosphate + 2 H(+). It participates in pyrimidine metabolism; CTP biosynthesis via de novo pathway; CTP from UDP: step 2/2. Its activity is regulated as follows. Allosterically activated by GTP, when glutamine is the substrate; GTP has no effect on the reaction when ammonia is the substrate. The allosteric effector GTP functions by stabilizing the protein conformation that binds the tetrahedral intermediate(s) formed during glutamine hydrolysis. Inhibited by the product CTP, via allosteric rather than competitive inhibition. In terms of biological role, catalyzes the ATP-dependent amination of UTP to CTP with either L-glutamine or ammonia as the source of nitrogen. Regulates intracellular CTP levels through interactions with the four ribonucleotide triphosphates. The chain is CTP synthase from Maridesulfovibrio salexigens (strain ATCC 14822 / DSM 2638 / NCIMB 8403 / VKM B-1763) (Desulfovibrio salexigens).